Reading from the N-terminus, the 338-residue chain is Diacylglycerol acyltransferase/mycolyltransferase Ag85A (338 aa).

An N-terminal signal peptide occupies residues 1–42; the sequence is MQLVDRVRGAVTGMSRRLVVGAVGAALVSGLVGAVGGTATAG. A substrate-binding site is contributed by 85–86; sequence LR. The fibronectin-binding stretch occupies residues 101 to 111; it reads FEWYDQSGLSV. C130 and C135 are disulfide-bonded. 2 residues coordinate substrate: S169 and D197. S169 serves as the catalytic Nucleophile. The active site involves E273. Substrate contacts are provided by residues 275–278, K282, and 305–307; these read FVRT and HSW. The active site involves H305.

Belongs to the mycobacterial A85 antigen family. In terms of assembly, homodimer.

The protein localises to the secreted. The protein resides in the cell wall. It is found in the cytoplasm. It catalyses the reaction an acyl-CoA + a 1,2-diacyl-sn-glycerol = a triacyl-sn-glycerol + CoA. The enzyme catalyses 2 alpha,alpha'-trehalose 6-mycolate = alpha,alpha'-trehalose 6,6'-bismycolate + alpha,alpha-trehalose. The antigen 85 proteins (FbpA, FbpB, FbpC) are responsible for the high affinity of mycobacteria for fibronectin, a large adhesive glycoprotein, which facilitates the attachment of M.tuberculosis to murine alveolar macrophages (AMs). They also help to maintain the integrity of the cell wall by catalyzing the transfer of mycolic acids to cell wall arabinogalactan, and through the synthesis of alpha,alpha-trehalose dimycolate (TDM, cord factor). They catalyze the transfer of a mycoloyl residue from one molecule of alpha,alpha-trehalose monomycolate (TMM) to another TMM, leading to the formation of TDM. FbpA mediates triacylglycerol (TAG) formation with long-chain acyl-CoA as the acyl donor and 1,2-dipalmitoyl-sn-glycerol (1,2-dipalmitin) as the acyl acceptor. It has a preference for C26:0-CoA over C18:1-CoA. The chain is Diacylglycerol acyltransferase/mycolyltransferase Ag85A (fbpA) from Mycobacterium bovis (strain ATCC BAA-935 / AF2122/97).